The sequence spans 479 residues: Zinc finger and SCAN domain-containing protein 26 (479 aa).

A Glycyl lysine isopeptide (Lys-Gly) (interchain with G-Cter in SUMO2) cross-link involves residue lysine 17. The 83-residue stretch at 51–133 (CKRFRQLRYE…VFLEDLQLEL (83 aa)) folds into the SCAN box domain. The segment at 155 to 187 (TAPGKATPERQVQPEGDVPQPEREKGEAKRIEN) is disordered. Residues 174 to 187 (QPEREKGEAKRIEN) show a composition bias toward basic and acidic residues. The C2H2-type 1; degenerate zinc finger occupies 232-254 (CKCSEYGQAFFQHSDLIKHESSH). 7 consecutive C2H2-type zinc fingers follow at residues 283 to 305 (HQCHECGKAFQRSSHLVRHQKIH), 311 to 333 (YQCKECGKVFSQNAGLLEHLRIH), 339 to 361 (YLCIHCGKNFRRSSHLNRHQRIH), 367 to 389 (CQCKECGKTFSQALLLTHHQRIH), 395 to 417 (HQCNECGKTFSLTSDLIRHHRIH), 423 to 445 (FKCTICQKAFRLNSHLAQHVRIH), and 451 to 473 (YKCNECGEAFRQRSGLFQHQRYH).

It localises to the nucleus. Functionally, may be involved in transcriptional regulation. This is Zinc finger and SCAN domain-containing protein 26 (ZSCAN26) from Bos taurus (Bovine).